The chain runs to 222 residues: LexA repressor (222 aa).

Positions 28–48 (IREIGEHMDIRSTNGVNDHLK) form a DNA-binding region, H-T-H motif. Active-site for autocatalytic cleavage activity residues include S135 and K172.

Belongs to the peptidase S24 family. As to quaternary structure, homodimer.

The enzyme catalyses Hydrolysis of Ala-|-Gly bond in repressor LexA.. Its function is as follows. Represses a number of genes involved in the response to DNA damage (SOS response), including recA and lexA. In the presence of single-stranded DNA, RecA interacts with LexA causing an autocatalytic cleavage which disrupts the DNA-binding part of LexA, leading to derepression of the SOS regulon and eventually DNA repair. This is LexA repressor from Myxococcus xanthus (strain DK1622).